The sequence spans 51 residues: AANQRLCGSHLVDALYLVCGERGFFYSPKGGIVEQCCHNTCSLYQLENYCN.

Disulfide bonds link cysteine 7-cysteine 37, cysteine 19-cysteine 50, and cysteine 36-cysteine 41.

This sequence belongs to the insulin family. Heterodimer of a B chain and an A chain linked by two disulfide bonds.

The protein localises to the secreted. In terms of biological role, insulin decreases blood glucose concentration. It increases cell permeability to monosaccharides, amino acids and fatty acids. It accelerates glycolysis, the pentose phosphate cycle, and glycogen synthesis in liver. The polypeptide is Insulin (INS) (Alligator mississippiensis (American alligator)).